We begin with the raw amino-acid sequence, 737 residues long: DNA topoisomerase 4 subunit A (737 aa).

Positions 32–496 constitute a Topo IIA-type catalytic domain; it reads LPDVRDGLKP…SFEEVTLTNQ (465 aa). Catalysis depends on Y120, which acts as the O-(5'-phospho-DNA)-tyrosine intermediate.

It belongs to the type II topoisomerase GyrA/ParC subunit family. ParC type 1 subfamily. Heterotetramer composed of ParC and ParE.

It is found in the cell membrane. The catalysed reaction is ATP-dependent breakage, passage and rejoining of double-stranded DNA.. Topoisomerase IV is essential for chromosome segregation. It relaxes supercoiled DNA. Performs the decatenation events required during the replication of a circular DNA molecule. The protein is DNA topoisomerase 4 subunit A of Rickettsia felis (strain ATCC VR-1525 / URRWXCal2) (Rickettsia azadi).